The sequence spans 130 residues: Small ribosomal subunit protein uS8 (130 aa).

The protein belongs to the universal ribosomal protein uS8 family. As to quaternary structure, part of the 30S ribosomal subunit. Contacts proteins S5 and S12.

One of the primary rRNA binding proteins, it binds directly to 16S rRNA central domain where it helps coordinate assembly of the platform of the 30S subunit. This chain is Small ribosomal subunit protein uS8, found in Coxiella burnetii (strain RSA 331 / Henzerling II).